The following is a 638-amino-acid chain: Phosphomethylpyrimidine synthase (638 aa).

Substrate-binding positions include Asn243, Met272, Tyr301, His337, 357–359 (SRG), 398–401 (DGLR), and Glu437. His441 provides a ligand contact to Zn(2+). Residue Tyr464 participates in substrate binding. Residue His505 coordinates Zn(2+). [4Fe-4S] cluster-binding residues include Cys585, Cys588, and Cys593.

The protein belongs to the ThiC family. Homodimer. It depends on [4Fe-4S] cluster as a cofactor.

The enzyme catalyses 5-amino-1-(5-phospho-beta-D-ribosyl)imidazole + S-adenosyl-L-methionine = 4-amino-2-methyl-5-(phosphooxymethyl)pyrimidine + CO + 5'-deoxyadenosine + formate + L-methionine + 3 H(+). It participates in cofactor biosynthesis; thiamine diphosphate biosynthesis. Catalyzes the synthesis of the hydroxymethylpyrimidine phosphate (HMP-P) moiety of thiamine from aminoimidazole ribotide (AIR) in a radical S-adenosyl-L-methionine (SAM)-dependent reaction. This chain is Phosphomethylpyrimidine synthase, found in Azoarcus sp. (strain BH72).